We begin with the raw amino-acid sequence, 156 residues long: ATP synthase subunit b (156 aa).

A helical transmembrane segment spans residues 5-25; that stretch reads LTLIGQAIAFAIFVAFCMKFV.

The protein belongs to the ATPase B chain family. As to quaternary structure, F-type ATPases have 2 components, F(1) - the catalytic core - and F(0) - the membrane proton channel. F(1) has five subunits: alpha(3), beta(3), gamma(1), delta(1), epsilon(1). F(0) has three main subunits: a(1), b(2) and c(10-14). The alpha and beta chains form an alternating ring which encloses part of the gamma chain. F(1) is attached to F(0) by a central stalk formed by the gamma and epsilon chains, while a peripheral stalk is formed by the delta and b chains.

The protein localises to the cell inner membrane. Functionally, f(1)F(0) ATP synthase produces ATP from ADP in the presence of a proton or sodium gradient. F-type ATPases consist of two structural domains, F(1) containing the extramembraneous catalytic core and F(0) containing the membrane proton channel, linked together by a central stalk and a peripheral stalk. During catalysis, ATP synthesis in the catalytic domain of F(1) is coupled via a rotary mechanism of the central stalk subunits to proton translocation. Component of the F(0) channel, it forms part of the peripheral stalk, linking F(1) to F(0). The polypeptide is ATP synthase subunit b (Acinetobacter baylyi (strain ATCC 33305 / BD413 / ADP1)).